Here is a 344-residue protein sequence, read N- to C-terminus: Protein-glutamate methylesterase/protein-glutamine glutaminase 1 (344 aa).

Residues 5-122 (RVLVVDDSAT…GTQEALAEIV (118 aa)) form the Response regulatory domain. Position 56 is a 4-aspartylphosphate (Asp56). One can recognise a CheB-type methylesterase domain in the interval 151–343 (FMPSGDIVAI…QSILDLASAR (193 aa)). Catalysis depends on residues Ser163, His189, and Asp285.

This sequence belongs to the CheB family. Post-translationally, phosphorylated by CheA. Phosphorylation of the N-terminal regulatory domain activates the methylesterase activity.

It localises to the cytoplasm. It carries out the reaction [protein]-L-glutamate 5-O-methyl ester + H2O = L-glutamyl-[protein] + methanol + H(+). The enzyme catalyses L-glutaminyl-[protein] + H2O = L-glutamyl-[protein] + NH4(+). Its function is as follows. Involved in chemotaxis. Part of a chemotaxis signal transduction system that modulates chemotaxis in response to various stimuli. Catalyzes the demethylation of specific methylglutamate residues introduced into the chemoreceptors (methyl-accepting chemotaxis proteins or MCP) by CheR. Also mediates the irreversible deamidation of specific glutamine residues to glutamic acid. This chain is Protein-glutamate methylesterase/protein-glutamine glutaminase 1, found in Caulobacter vibrioides (strain ATCC 19089 / CIP 103742 / CB 15) (Caulobacter crescentus).